An 83-amino-acid chain; its full sequence is Small ribosomal subunit protein bS16 (83 aa).

It belongs to the bacterial ribosomal protein bS16 family.

This is Small ribosomal subunit protein bS16 from Borrelia turicatae (strain 91E135).